Consider the following 79-residue polypeptide: Beta-defensin 130 (79 aa).

Positions 1 to 22 (MKLHSLISVLLLFVTLIPKGKT) are cleaved as a signal peptide. 2 cysteine pairs are disulfide-bonded: C38/C53 and C43/C60.

Belongs to the beta-defensin family.

It is found in the secreted. Functionally, antimicrobial host-defense peptide. The polypeptide is Beta-defensin 130 (Pan troglodytes (Chimpanzee)).